Consider the following 89-residue polypeptide: Defensin-like protein 108 (89 aa).

The N-terminal stretch at 1–20 (MTSLIAFLFTVLVIVSSVHC) is a signal peptide. 4 disulfides stabilise this stretch: C39–C81, C49–C71, C57–C79, and C61–C80.

It belongs to the DEFL family.

It is found in the secreted. The protein is Defensin-like protein 108 (LCR51) of Arabidopsis thaliana (Mouse-ear cress).